A 333-amino-acid chain; its full sequence is HTH-type transcriptional regulator CbbR (333 aa).

The HTH lysR-type domain occupies 5–62 (WTLRQLRLVALAAASGSYAKAAQDMGLSPPAVTAQMKALEEDIGVPMFERVDGRLRPT). The segment at residues 22 to 41 (YAKAAQDMGLSPPAVTAQMK) is a DNA-binding region (H-T-H motif).

Belongs to the LysR transcriptional regulatory family.

Functionally, transcriptional activator for the cbb operon (cbbLSXFP) for RuBisCO and other Calvin cycle genes. Binds specifically to two binding sites in the cbbR-cbbL intergenic region. In Xanthobacter flavus, this protein is HTH-type transcriptional regulator CbbR (cbbR).